Consider the following 911-residue polypeptide: Protein translocase subunit SecA (911 aa).

ATP contacts are provided by residues Gln-86, 104-108 (GEGKT), and Asp-494. Residues 856–911 (VEGIDAPQRPAQLRFTGPSEDGQSAVTRSGTDSGATVAAGTNRRSRRQAERRGRRG) form a disordered region. Residues 876-889 (DGQSAVTRSGTDSG) show a composition bias toward polar residues. Basic and acidic residues predominate over residues 902-911 (RQAERRGRRG).

It belongs to the SecA family. In terms of assembly, monomer and homodimer. Part of the essential Sec protein translocation apparatus which comprises SecA, SecYEG and auxiliary proteins SecDF. Other proteins may also be involved.

The protein resides in the cell membrane. The protein localises to the cytoplasm. The catalysed reaction is ATP + H2O + cellular proteinSide 1 = ADP + phosphate + cellular proteinSide 2.. Part of the Sec protein translocase complex. Interacts with the SecYEG preprotein conducting channel. Has a central role in coupling the hydrolysis of ATP to the transfer of proteins into and across the cell membrane, serving as an ATP-driven molecular motor driving the stepwise translocation of polypeptide chains across the membrane. The chain is Protein translocase subunit SecA from Micrococcus luteus (strain ATCC 4698 / DSM 20030 / JCM 1464 / CCM 169 / CCUG 5858 / IAM 1056 / NBRC 3333 / NCIMB 9278 / NCTC 2665 / VKM Ac-2230) (Micrococcus lysodeikticus).